We begin with the raw amino-acid sequence, 225 residues long: Ribosomal RNA small subunit methyltransferase G (225 aa).

S-adenosyl-L-methionine-binding positions include Gly69, 119 to 120, and Arg136; that span reads AE.

It belongs to the methyltransferase superfamily. RNA methyltransferase RsmG family.

The protein localises to the cytoplasm. Specifically methylates the N7 position of a guanine in 16S rRNA. The chain is Ribosomal RNA small subunit methyltransferase G from Pseudothermotoga lettingae (strain ATCC BAA-301 / DSM 14385 / NBRC 107922 / TMO) (Thermotoga lettingae).